We begin with the raw amino-acid sequence, 375 residues long: ATP-sensitive inward rectifier potassium channel 15 (375 aa).

Residues 1–60 (MDAIHIGMSSTPLVKHTAGAGLKANRPRVMSKSGHSNVRIDKVDGIYLLYLQDLWTTVID) are Cytoplasmic-facing. A helical transmembrane segment spans residues 61-87 (MKWRYKLTLFAATFVMTWFLFGVIYYA). The Extracellular segment spans residues 88–113 (IAFIHGDLEPGEPISNHTPCIMKVDS). The helical; Pore-forming intramembrane region spans 114–130 (LTGAFLFSLESQTTIGY). The Selectivity filter signature appears at 127–132 (TIGYGV). At 131–139 (GVRSITEEC) the chain is on the extracellular side. Residues 140 to 165 (PHAIFLLVAQLVITTLIEIFITGTFL) traverse the membrane as a helical segment. Residues 166–375 (AKIARPKKRA…RTLLLQQSNV (210 aa)) lie on the Cytoplasmic side of the membrane.

The protein belongs to the inward rectifier-type potassium channel (TC 1.A.2.1) family. KCNJ15 subfamily. Can form heteromultimeric channels with Kir5.1/KCNJ16. Interacts with PATJ.

The protein resides in the membrane. It localises to the cell membrane. It catalyses the reaction K(+)(in) = K(+)(out). Its activity is regulated as follows. Channel activity is regulated by variations of cytosolic pH; reversibly inhibited by acidic pH values. Inhibited by Ba(2+) and Cs(+) in a voltage-dependent manner. Inward rectifier potassium channels are characterized by a greater tendency to allow potassium to flow into the cell rather than out of it. Their voltage dependence is regulated by the concentration of extracellular potassium; as external potassium is raised, the voltage range of the channel opening shifts to more positive voltages. The inward rectification is mainly due to the blockage of outward current by internal magnesium. This is ATP-sensitive inward rectifier potassium channel 15 (KCNJ15) from Homo sapiens (Human).